Reading from the N-terminus, the 350-residue chain is 5'-tyrosyl-DNA phosphodiesterase (350 aa).

Positions 113–117 (NIDGL) are interaction with 5' end of substrate DNA. The Mg(2+) site is built by Asp-115 and Glu-145. Residues 219 to 224 (HLESMR) form an interaction with 5' end of substrate DNA region. The active-site Proton donor/acceptor is Asp-258. The interval 260-262 (NLR) is interaction with 5' end of substrate DNA.

Belongs to the CCR4/nocturin family. TTRAP/TDP2 subfamily. Requires Mg(2+) as cofactor. Mn(2+) is required as a cofactor.

It localises to the nucleus. The protein resides in the PML body. In terms of biological role, DNA repair enzyme that can remove a variety of covalent adducts from DNA through hydrolysis of a 5'-phosphodiester bond, giving rise to DNA with a free 5' phosphate. Catalyzes the hydrolysis of dead-end complexes between DNA and the topoisomerase 2 (top2) active site tyrosine residue. Hydrolyzes 5'-phosphoglycolates on protruding 5' ends on DNA double-strand breaks (DSBs) due to DNA damage by radiation and free radicals. This Caenorhabditis briggsae protein is 5'-tyrosyl-DNA phosphodiesterase.